Reading from the N-terminus, the 25-residue chain is uncharacterized protein (25 aa).

It localises to the plastid. The protein resides in the chloroplast. This is an uncharacterized protein from Trieres chinensis (Marine centric diatom).